An 84-amino-acid chain; its full sequence is Small ribosomal subunit protein bS18A (84 aa).

This sequence belongs to the bacterial ribosomal protein bS18 family. In terms of assembly, part of the 30S ribosomal subunit. Forms a tight heterodimer with protein bS6.

Its function is as follows. Binds as a heterodimer with protein bS6 to the central domain of the 16S rRNA, where it helps stabilize the platform of the 30S subunit. This chain is Small ribosomal subunit protein bS18A, found in Frankia alni (strain DSM 45986 / CECT 9034 / ACN14a).